The following is a 46-amino-acid chain: AVKCIGWQETCNGKLPCCDGCVMCECNIMGQNCRCNHPKATSECES.

5 disulfides stabilise this stretch: Cys-4–Cys-18, Cys-11–Cys-24, Cys-17–Cys-35, Cys-21–Cys-44, and Cys-26–Cys-33.

This sequence belongs to the neurotoxin 02 (plectoxin) family. 02 (plectoxin) subfamily. As to expression, expressed by the venom gland.

The protein localises to the secreted. Functionally, potent toxin that may paralyze and/or kill insect pests such as H.virescens (lepidoptera), S.exigua (beet armyworm) and M.sexta (tobacco hornworm). The polypeptide is U1-plectoxin-Pt1f (Plectreurys tristis (Spider)).